The primary structure comprises 232 residues: Orotidine 5'-phosphate decarboxylase (232 aa).

Residues Asp13, Lys35, 62–71 (DLKFHDIPNT), Thr122, Arg182, Gln191, Gly211, and Arg212 each bind substrate. Lys64 (proton donor) is an active-site residue.

The protein belongs to the OMP decarboxylase family. Type 1 subfamily. As to quaternary structure, homodimer.

It carries out the reaction orotidine 5'-phosphate + H(+) = UMP + CO2. It participates in pyrimidine metabolism; UMP biosynthesis via de novo pathway; UMP from orotate: step 2/2. Catalyzes the decarboxylation of orotidine 5'-monophosphate (OMP) to uridine 5'-monophosphate (UMP). The sequence is that of Orotidine 5'-phosphate decarboxylase from Pseudomonas savastanoi pv. phaseolicola (strain 1448A / Race 6) (Pseudomonas syringae pv. phaseolicola (strain 1448A / Race 6)).